The sequence spans 160 residues: Single-stranded DNA-binding protein 3 (160 aa).

One can recognise an SSB domain in the interval 2–104 (MNRVVLVGRL…IVAESVQFLE (103 aa)). Positions 106–133 (KQNGAGGSTSNNNQSETNYSNDNKTSSY) are enriched in polar residues. A disordered region spans residues 106–160 (KQNGAGGSTSNNNQSETNYSNDNKTSSYRADRSQNGDSFANEGAPVDINPDDLPF).

As to quaternary structure, homotetramer.

The chain is Single-stranded DNA-binding protein 3 (ssb3) from Listeria innocua serovar 6a (strain ATCC BAA-680 / CLIP 11262).